The chain runs to 249 residues: Protein LicA homolog (249 aa).

Belongs to the peptidase S49 family.

This is Protein LicA homolog (licA) from Metamycoplasma hominis (strain ATCC 23114 / DSM 25592 / NBRC 14850 / NCTC 10111 / PG21) (Mycoplasma hominis).